We begin with the raw amino-acid sequence, 914 residues long: DENN domain-containing protein 2C (914 aa).

Residues 46–98 (FGVRYNCHQESPPHKRPTGEERNGALPRNTDVKSRDQSEDEGEGGECRGSHPS) form a disordered region. The span at 56-68 (SPPHKRPTGEERN) shows a compositional bias: basic and acidic residues. The residue at position 261 (serine 261) is a Phosphoserine. The segment at 411-446 (GKKRVKLQPYTGKEAPSSKGETSGNESDAEYLPKNR) is disordered. The uDENN domain occupies 480 to 627 (ELFVVVSLQK…PFPAPGRTIT (148 aa)). The cDENN domain maps to 649–782 (RLEHVDFECL…LQAALVQILE (134 aa)). Residues 784–874 (RDEVLAQEQQ…QDRELRQSGV (91 aa)) form the dDENN domain.

Its function is as follows. Guanine nucleotide exchange factor (GEF) which may activate RAB9A and RAB9B. Promotes the exchange of GDP to GTP, converting inactive GDP-bound Rab proteins into their active GTP-bound form. The chain is DENN domain-containing protein 2C (Dennd2c) from Mus musculus (Mouse).